The primary structure comprises 132 residues: Intraflagellar transport protein 20 homolog A (132 aa).

Residues 87-112 are a coiled coil; the sequence is EAQQQQLYALIAEKKMQLERYRIEYD.

The protein resides in the golgi apparatus. The protein localises to the cis-Golgi network. It localises to the cytoplasm. It is found in the cytoskeleton. Its subcellular location is the microtubule organizing center. The protein resides in the centrosome. The protein localises to the centriole. It localises to the cell projection. It is found in the cilium. Its function is as follows. Involved in ciliary process assembly. May play a role in the trafficking of ciliary membrane proteins from the Golgi complex to the cilium. Regulates the platelet-derived growth factor receptor-alpha (PDGFRA) signaling pathway. Plays an important role in spermatogenesis, particularly spermiogenesis, when germ cells form flagella. This is Intraflagellar transport protein 20 homolog A (ift20-a) from Xenopus laevis (African clawed frog).